The sequence spans 283 residues: Diaminopimelate epimerase (283 aa).

Substrate-binding residues include Asn-13 and Asn-65. The Proton donor role is filled by Cys-74. Residues 75–76 (GN), Asn-196, and 214–215 (ER) contribute to the substrate site. The active-site Proton acceptor is Cys-223. 224 to 225 (GT) provides a ligand contact to substrate.

It belongs to the diaminopimelate epimerase family. Homodimer.

Its subcellular location is the cytoplasm. The catalysed reaction is (2S,6S)-2,6-diaminopimelate = meso-2,6-diaminopimelate. The protein operates within amino-acid biosynthesis; L-lysine biosynthesis via DAP pathway; DL-2,6-diaminopimelate from LL-2,6-diaminopimelate: step 1/1. Catalyzes the stereoinversion of LL-2,6-diaminopimelate (L,L-DAP) to meso-diaminopimelate (meso-DAP), a precursor of L-lysine and an essential component of the bacterial peptidoglycan. The protein is Diaminopimelate epimerase of Alkaliphilus metalliredigens (strain QYMF).